A 175-amino-acid chain; its full sequence is Putative metal-dependent hydrolase BPUM_0784 (175 aa).

Residues histidine 65, histidine 157, and histidine 161 each coordinate Zn(2+).

This sequence belongs to the metal hydrolase YfiT family. In terms of assembly, homodimer. Requires Zn(2+) as cofactor.

Its subcellular location is the cytoplasm. Possible metal-dependent hydrolase. This Bacillus pumilus (strain SAFR-032) protein is Putative metal-dependent hydrolase BPUM_0784.